The primary structure comprises 397 residues: Odorant receptor 2a (397 aa).

Residues 1–38 (MEKQEDFKLNTHSAVYYHWRVWELTGLMRPPGVSSLLY) lie on the Cytoplasmic side of the membrane. A helical membrane pass occupies residues 39-59 (VVYSITVNLVVTVLFPLSLLA). Residues 60-72 (RLLFTTNMAGLCE) are Extracellular-facing. The chain crosses the membrane as a helical span at residues 73 to 92 (NLTITITDIVANLKFANVYM). Over 93-131 (VRKQLHEIRSLLRLMDARARLVGDPEEISALRKEVNIAQ) the chain is Cytoplasmic. A helical membrane pass occupies residues 132 to 150 (GTFRTFASIFVFGTTLSCV). The Extracellular segment spans residues 151–176 (RVVVRPDRELLYPAWFGVDWMHSTRN). A helical transmembrane segment spans residues 177-197 (YVLINIYQLFGLIVQAIQNCA). Over 198–272 (SDSYPPAFLC…IIQRVLSVPC (75 aa)) the chain is Cytoplasmic. The chain crosses the membrane as a helical span at residues 273 to 293 (MAQFVCSAAVQCTVAMHFLYV). At 294 to 301 (ADDHDHTA) the chain is on the extracellular side. The chain crosses the membrane as a helical span at residues 302–322 (MIISIVFFSAVTLEVFVICYF). The Cytoplasmic segment spans residues 323–363 (GDRMRTQSEALCDAFYDCNWIEQLPKFKRELLFTLARTQRP). The chain crosses the membrane as a helical span at residues 364–383 (SLIYAGNYIALSLETFEQVM). The Extracellular segment spans residues 384-397 (RFTYSVFTLLLRAK).

This sequence belongs to the insect chemoreceptor superfamily. Heteromeric odorant receptor channel (TC 1.A.69) family. Or2a subfamily. As to quaternary structure, interacts with Orco. Complexes exist early in the endomembrane system in olfactory sensory neurons (OSNs), coupling these complexes to the conserved ciliary trafficking pathway. In terms of tissue distribution, expressed in 20 sensory neurons on the distal edge of the antenna.

It is found in the cell membrane. Functionally, odorant receptor which mediates acceptance or avoidance behavior, depending on its substrates. The odorant receptor repertoire encodes a large collection of odor stimuli that vary widely in identity, intensity, and duration. May form a complex with Orco to form odorant-sensing units, providing sensitive and prolonged odorant signaling and calcium permeability. This Drosophila melanogaster (Fruit fly) protein is Odorant receptor 2a (Or2a).